A 431-amino-acid polypeptide reads, in one-letter code: DNA polymerase delta subunit 2 (431 aa).

The protein belongs to the DNA polymerase delta/II small subunit family. As to quaternary structure, component of both the DNA polymerase delta and DNA polymerase zeta complexes. The DNA polymerase delta complex consisting of three subunits: the catalytic subunit PolD1 and two accessory subunits PolD2/Pol31 and PolD3/Pol32. Within the delta complex, interacts with both PolD1 and PolD3, and is able to interact with PolD1 in the absence of PolD3. Component of the DNA polymerase zeta complex consisting of four subunits: the catalytic subunit PolZ1 and three accessory subunits PolZ2/Rev7, PolD2/Pol31 and PolD3/Pol32. Expressed in ovaries and embryos (at the protein level).

It is found in the nucleus. It localises to the nucleoplasm. In terms of biological role, accessory component of both the DNA polymerase delta complex and possibly the DNA polymerase zeta complex. As a component of the delta complex, participates in high fidelity genome replication, including lagging strand synthesis, DNA recombination and repair. Appears to promote the function of the DNA pol-delta complex accessory subunit PolD3 in both embryonic and postembryonic somatic cells. The protein is DNA polymerase delta subunit 2 of Drosophila melanogaster (Fruit fly).